The following is a 571-amino-acid chain: Proline--tRNA ligase (571 aa).

The protein belongs to the class-II aminoacyl-tRNA synthetase family. ProS type 1 subfamily. As to quaternary structure, homodimer.

It localises to the cytoplasm. It catalyses the reaction tRNA(Pro) + L-proline + ATP = L-prolyl-tRNA(Pro) + AMP + diphosphate. Functionally, catalyzes the attachment of proline to tRNA(Pro) in a two-step reaction: proline is first activated by ATP to form Pro-AMP and then transferred to the acceptor end of tRNA(Pro). As ProRS can inadvertently accommodate and process non-cognate amino acids such as alanine and cysteine, to avoid such errors it has two additional distinct editing activities against alanine. One activity is designated as 'pretransfer' editing and involves the tRNA(Pro)-independent hydrolysis of activated Ala-AMP. The other activity is designated 'posttransfer' editing and involves deacylation of mischarged Ala-tRNA(Pro). The misacylated Cys-tRNA(Pro) is not edited by ProRS. This chain is Proline--tRNA ligase, found in Histophilus somni (strain 129Pt) (Haemophilus somnus).